The following is a 510-amino-acid chain: Thermostable carboxypeptidase 1 (510 aa).

Positions 3 to 506 (PEAAYQNLLE…FLAYLEKKYA (504 aa)) constitute a Peptidase M32 domain. The HPF motif lies at 245-247 (HPF). The DXRXT signature appears at 255-259 (DVRIT). Histidine 276 lines the Zn(2+) pocket. The HEXXH signature appears at 276-280 (HEMGH). Glutamate 277 (proton donor/acceptor) is an active-site residue. 2 residues coordinate Zn(2+): histidine 280 and glutamate 306. The short motif at 305 to 308 (HESQ) is the HES/GQ element. The I/NRXXA/SD signature appears at 357–362 (IRVEAD). Positions 412–419 (GVMQDVHW) match the GXXQDXHW motif.

The protein belongs to the peptidase M32 family. In terms of assembly, homodimer. The cofactor is Zn(2+).

It carries out the reaction Release of a C-terminal amino acid with broad specificity, except for -Pro.. Functionally, broad specificity carboxypetidase that releases amino acids sequentially from the C-terminus, including neutral, aromatic, polar and basic residues, but not Pro. Has lower activity with substrates ending with Gly or Glu. In Thermus thermophilus (strain ATCC 27634 / DSM 579 / HB8), this protein is Thermostable carboxypeptidase 1.